Consider the following 42-residue polypeptide: MELIKQIFPFANSEIITAAVVCFSMTLFGLSLGFGLLKVQGE.

The helical transmembrane segment at 19-37 threads the bilayer; it reads AVVCFSMTLFGLSLGFGLL.

Belongs to the PetM family. The 4 large subunits of the cytochrome b6-f complex are cytochrome b6, subunit IV (17 kDa polypeptide, PetD), cytochrome f and the Rieske protein, while the 4 small subunits are PetG, PetL, PetM and PetN. The complex functions as a dimer.

It is found in the plastid. The protein localises to the chloroplast thylakoid membrane. Component of the cytochrome b6-f complex, which mediates electron transfer between photosystem II (PSII) and photosystem I (PSI), cyclic electron flow around PSI, and state transitions. This Phaeodactylum tricornutum (strain CCAP 1055/1) protein is Cytochrome b6-f complex subunit 7.